We begin with the raw amino-acid sequence, 385 residues long: uncharacterized protein (385 aa).

Belongs to the phage portal family. HK97 subfamily.

This is an uncharacterized protein from Rickettsia bellii (strain RML369-C).